A 491-amino-acid chain; its full sequence is MSTTQRKDDSHLFTSSCTRQLQVQEDRQQQEKYVIAQPIFVFEKGEHNFKRPAEDSLEETAEPEFTGFLRKRVRSSSVTLHTTDPQSQGVATLSQTRLRSSSFTDVPTFPPCRPVRKNNVFMTSRLLQRSDDMNNVEQGPPMRSSEQVLRPAVLQPSQTQSCQKAGTTFGPGALKSYKTKEKAEHEISEVGSSSSLLSENLPNARSSIQLSTDPCISEAPSGCQPKEDKCSFTSCSSDFVFGENMVERVLGTQKLTQPPLQNLSYAKEKTFKSVLKFPNAVSNSDSIENISLVESAAAFSSKPSQKCLLEKIDVITGEETEHNVLKINCKIFVFNKATESWSERGQGILRLNDTAGRECGTLQSRLIMRNQGSLRLVLNSRLWAQMKIQRASQKNLRITATDLEDDGIKIFLIQASAKDTGFLYAAIHHRLVALRSLAKQGDGGPAESQSDTALPQLNGESCDEDEDEIAQVTKNGSDPSRWSHRQSIVCS.

The RanBD1 domain maps to 270–441 (TFKSVLKFPN…VALRSLAKQG (172 aa)). Positions 440 to 468 (QGDGGPAESQSDTALPQLNGESCDEDEDE) are disordered. A compositionally biased stretch (polar residues) spans 447–459 (ESQSDTALPQLNG).

As to quaternary structure, interacts with SMAD1, SMAD5 and SMAD8.

It is found in the nucleus. The protein resides in the cytoplasm. Its function is as follows. Nuclear export factor for BMP-specific SMAD1/5/8 that plays a critical role in terminating BMP signaling and regulating mesenchymal stem cell differentiation by blocking osteoblast differentiation to promote myogenic differention. Directly recognizes dephosphorylated SMAD1/5/8 and mediates their nuclear export in a Ran-dependent manner. The sequence is that of Ran-binding protein 3-like (Ranbp3l) from Mus musculus (Mouse).